Reading from the N-terminus, the 281-residue chain is GPN-loop GTPase 3 (281 aa).

13–18 (GSGKST) serves as a coordination point for GTP. Residues 70–72 (GPN) carry the Gly-Pro-Asn (GPN)-loop; involved in dimer interface motif. 173 to 176 (SKMD) provides a ligand contact to GTP. The segment at 259–281 (VQYGEDEEPKEPKDMDEGDFTAQ) is disordered.

This sequence belongs to the GPN-loop GTPase family. Heterodimers with GPN1 or GPN2. Binds to RNA polymerase II (RNAPII).

Small GTPase required for proper nuclear import of RNA polymerase II and III (RNAPII and RNAPIII). May act at an RNAP assembly step prior to nuclear import. This Mycosarcoma maydis (Corn smut fungus) protein is GPN-loop GTPase 3.